A 380-amino-acid polypeptide reads, in one-letter code: Cytochrome b (380 aa).

The next 4 membrane-spanning stretches (helical) occupy residues 34-54, 78-99, 114-134, and 179-199; these read FGSL…LLAM, WLIR…YLHI, WNTG…GYVL, and FFAL…IHLT. Positions 84 and 98 each coordinate heme b. Heme b is bound by residues histidine 183 and histidine 197. Residue histidine 202 coordinates a ubiquinone. 4 helical membrane-spanning segments follow: residues 227-247, 289-309, 321-341, and 348-368; these read TKDL…ALFS, LGGV…PFLH, LSQI…WVGS, and FIII…ILFP.

It belongs to the cytochrome b family. The cytochrome bc1 complex contains 11 subunits: 3 respiratory subunits (MT-CYB, CYC1 and UQCRFS1), 2 core proteins (UQCRC1 and UQCRC2) and 6 low-molecular weight proteins (UQCRH/QCR6, UQCRB/QCR7, UQCRQ/QCR8, UQCR10/QCR9, UQCR11/QCR10 and a cleavage product of UQCRFS1). This cytochrome bc1 complex then forms a dimer. Requires heme b as cofactor.

The protein localises to the mitochondrion inner membrane. Component of the ubiquinol-cytochrome c reductase complex (complex III or cytochrome b-c1 complex) that is part of the mitochondrial respiratory chain. The b-c1 complex mediates electron transfer from ubiquinol to cytochrome c. Contributes to the generation of a proton gradient across the mitochondrial membrane that is then used for ATP synthesis. In Aerodramus vulcanorum (Volcano swiftlet), this protein is Cytochrome b (MT-CYB).